Reading from the N-terminus, the 388-residue chain is Chorismate synthase (388 aa).

Positions 39 and 45 each coordinate NADP(+). FMN is bound by residues 132-134 (RSS), 251-252 (NA), G296, 311-315 (KPIPT), and R337.

This sequence belongs to the chorismate synthase family. As to quaternary structure, homotetramer. The cofactor is FMNH2.

It carries out the reaction 5-O-(1-carboxyvinyl)-3-phosphoshikimate = chorismate + phosphate. It participates in metabolic intermediate biosynthesis; chorismate biosynthesis; chorismate from D-erythrose 4-phosphate and phosphoenolpyruvate: step 7/7. Catalyzes the anti-1,4-elimination of the C-3 phosphate and the C-6 proR hydrogen from 5-enolpyruvylshikimate-3-phosphate (EPSP) to yield chorismate, which is the branch point compound that serves as the starting substrate for the three terminal pathways of aromatic amino acid biosynthesis. This reaction introduces a second double bond into the aromatic ring system. The chain is Chorismate synthase from Staphylococcus aureus (strain COL).